Reading from the N-terminus, the 244-residue chain is Probable H/ACA ribonucleoprotein complex subunit 1-like protein (244 aa).

Disordered stretches follow at residues Met1 to Asp53 and Phe145 to Glu244. 2 RGG-box regions span residues Arg4–Gly51 and Arg153–Gly222. The span at Arg160–Gly173 shows a compositional bias: basic and acidic residues. 2 stretches are compositionally biased toward gly residues: residues Arg174–Arg201 and Phe208–Gly217. Over residues Gly218–Tyr228 the composition is skewed to basic and acidic residues.

The protein belongs to the GAR1 family. In terms of assembly, component of the small nucleolar ribonucleoprotein particle containing H/ACA-type snoRNAs (H/ACA snoRNPs).

The protein localises to the nucleus. The protein resides in the nucleolus. In terms of biological role, required for ribosome biogenesis. Part of a complex which catalyzes pseudouridylation of rRNA. This involves the isomerization of uridine such that the ribose is subsequently attached to C5, instead of the normal N1. Pseudouridine ('psi') residues may serve to stabilize the conformation of rRNAs. Involved in phase separation into sub-nucleolar condensates. Essential for normal development and also plays a role in fertility. In Caenorhabditis elegans, this protein is Probable H/ACA ribonucleoprotein complex subunit 1-like protein.